The primary structure comprises 529 residues: Bifunctional purine biosynthesis protein PurH (529 aa).

Residues 1–148 form the MGS-like domain; sequence MQQRRPVRRA…KNHKDVAIVV (148 aa).

Belongs to the PurH family.

The enzyme catalyses (6R)-10-formyltetrahydrofolate + 5-amino-1-(5-phospho-beta-D-ribosyl)imidazole-4-carboxamide = 5-formamido-1-(5-phospho-D-ribosyl)imidazole-4-carboxamide + (6S)-5,6,7,8-tetrahydrofolate. It carries out the reaction IMP + H2O = 5-formamido-1-(5-phospho-D-ribosyl)imidazole-4-carboxamide. The protein operates within purine metabolism; IMP biosynthesis via de novo pathway; 5-formamido-1-(5-phospho-D-ribosyl)imidazole-4-carboxamide from 5-amino-1-(5-phospho-D-ribosyl)imidazole-4-carboxamide (10-formyl THF route): step 1/1. It functions in the pathway purine metabolism; IMP biosynthesis via de novo pathway; IMP from 5-formamido-1-(5-phospho-D-ribosyl)imidazole-4-carboxamide: step 1/1. The polypeptide is Bifunctional purine biosynthesis protein PurH (Salmonella paratyphi C (strain RKS4594)).